A 140-amino-acid chain; its full sequence is Sex-regulated protein janus-B (140 aa).

Arginine 42 contributes to the substrate binding site. The active-site Proton acceptor is histidine 69. 110-112 lines the substrate pocket; it reads SRT.

The protein belongs to the janus family.

Its function is as follows. JanA and janB regulate somatic sex differentiation. The protein is Sex-regulated protein janus-B (janB) of Drosophila erecta (Fruit fly).